A 63-amino-acid polypeptide reads, in one-letter code: Cytochrome c oxidase subunit 5C-1 (63 aa).

The helical transmembrane segment at 15 to 34 (SEVKELIIGSVLGLAAGGLW) threads the bilayer.

This sequence belongs to the cytochrome c oxidase subunit 5C family.

The protein resides in the mitochondrion inner membrane. In terms of biological role, this protein is one of the nuclear-coded polypeptide chains of cytochrome c oxidase, the terminal oxidase in mitochondrial electron transport. The sequence is that of Cytochrome c oxidase subunit 5C-1 (COX5C1) from Helianthus annuus (Common sunflower).